A 483-amino-acid polypeptide reads, in one-letter code: Cobyric acid synthase (483 aa).

Residues 251–438 (SLVVAVPMLP…LHGVFNADEF (188 aa)) form the GATase cobBQ-type domain. Cysteine 333 functions as the Nucleophile in the catalytic mechanism. Histidine 430 is an active-site residue.

The protein belongs to the CobB/CobQ family. CobQ subfamily.

The protein operates within cofactor biosynthesis; adenosylcobalamin biosynthesis. Functionally, catalyzes amidations at positions B, D, E, and G on adenosylcobyrinic A,C-diamide. NH(2) groups are provided by glutamine, and one molecule of ATP is hydrogenolyzed for each amidation. The sequence is that of Cobyric acid synthase from Brucella anthropi (strain ATCC 49188 / DSM 6882 / CCUG 24695 / JCM 21032 / LMG 3331 / NBRC 15819 / NCTC 12168 / Alc 37) (Ochrobactrum anthropi).